The primary structure comprises 342 residues: Porphobilinogen deaminase (342 aa).

S-(dipyrrolylmethanemethyl)cysteine is present on cysteine 249. The disordered stretch occupies residues 323 to 342 (AAAKQGAAEDGAADSAATGE).

This sequence belongs to the HMBS family. In terms of assembly, monomer. Dipyrromethane is required as a cofactor.

The enzyme catalyses 4 porphobilinogen + H2O = hydroxymethylbilane + 4 NH4(+). It functions in the pathway porphyrin-containing compound metabolism; protoporphyrin-IX biosynthesis; coproporphyrinogen-III from 5-aminolevulinate: step 2/4. Its function is as follows. Tetrapolymerization of the monopyrrole PBG into the hydroxymethylbilane pre-uroporphyrinogen in several discrete steps. This Paraburkholderia phytofirmans (strain DSM 17436 / LMG 22146 / PsJN) (Burkholderia phytofirmans) protein is Porphobilinogen deaminase.